Consider the following 346-residue polypeptide: Holliday junction branch migration complex subunit RuvB (346 aa).

The segment at 1-182 (MTRVISGEPQ…FGIPIRLEFY (182 aa)) is large ATPase domain (RuvB-L). Residues L21, R22, G63, K66, T67, T68, R172, Y182, and R219 each contribute to the ATP site. T67 is a binding site for Mg(2+). A small ATPAse domain (RuvB-S) region spans residues 183 to 253 (TPAELRHVLQ…AAAMALARLE (71 aa)). The segment at 256-346 (ESGLDSLDRR…QAQGALFDEG (91 aa)) is head domain (RuvB-H). The DNA site is built by R292, R311, and R316.

The protein belongs to the RuvB family. In terms of assembly, homohexamer. Forms an RuvA(8)-RuvB(12)-Holliday junction (HJ) complex. HJ DNA is sandwiched between 2 RuvA tetramers; dsDNA enters through RuvA and exits via RuvB. An RuvB hexamer assembles on each DNA strand where it exits the tetramer. Each RuvB hexamer is contacted by two RuvA subunits (via domain III) on 2 adjacent RuvB subunits; this complex drives branch migration. In the full resolvosome a probable DNA-RuvA(4)-RuvB(12)-RuvC(2) complex forms which resolves the HJ.

It is found in the cytoplasm. It carries out the reaction ATP + H2O = ADP + phosphate + H(+). Functionally, the RuvA-RuvB-RuvC complex processes Holliday junction (HJ) DNA during genetic recombination and DNA repair, while the RuvA-RuvB complex plays an important role in the rescue of blocked DNA replication forks via replication fork reversal (RFR). RuvA specifically binds to HJ cruciform DNA, conferring on it an open structure. The RuvB hexamer acts as an ATP-dependent pump, pulling dsDNA into and through the RuvAB complex. RuvB forms 2 homohexamers on either side of HJ DNA bound by 1 or 2 RuvA tetramers; 4 subunits per hexamer contact DNA at a time. Coordinated motions by a converter formed by DNA-disengaged RuvB subunits stimulates ATP hydrolysis and nucleotide exchange. Immobilization of the converter enables RuvB to convert the ATP-contained energy into a lever motion, pulling 2 nucleotides of DNA out of the RuvA tetramer per ATP hydrolyzed, thus driving DNA branch migration. The RuvB motors rotate together with the DNA substrate, which together with the progressing nucleotide cycle form the mechanistic basis for DNA recombination by continuous HJ branch migration. Branch migration allows RuvC to scan DNA until it finds its consensus sequence, where it cleaves and resolves cruciform DNA. This is Holliday junction branch migration complex subunit RuvB from Caulobacter vibrioides (strain ATCC 19089 / CIP 103742 / CB 15) (Caulobacter crescentus).